A 121-amino-acid polypeptide reads, in one-letter code: uncharacterized protein (121 aa).

It to E.coli YcjD and H.influenzae HI_1162.

This is an uncharacterized protein from Haemophilus influenzae (strain ATCC 51907 / DSM 11121 / KW20 / Rd).